Reading from the N-terminus, the 518-residue chain is ATP synthase subunit alpha (518 aa).

170–177 lines the ATP pocket; that stretch reads GDRQTGKT.

The protein belongs to the ATPase alpha/beta chains family. F-type ATPases have 2 components, CF(1) - the catalytic core - and CF(0) - the membrane proton channel. CF(1) has five subunits: alpha(3), beta(3), gamma(1), delta(1), epsilon(1). CF(0) has three main subunits: a(1), b(2) and c(9-12). The alpha and beta chains form an alternating ring which encloses part of the gamma chain. CF(1) is attached to CF(0) by a central stalk formed by the gamma and epsilon chains, while a peripheral stalk is formed by the delta and b chains.

It is found in the cell membrane. It catalyses the reaction ATP + H2O + 4 H(+)(in) = ADP + phosphate + 5 H(+)(out). Produces ATP from ADP in the presence of a proton gradient across the membrane. The alpha chain is a regulatory subunit. This is ATP synthase subunit alpha from Mycoplasmoides gallisepticum (strain R(low / passage 15 / clone 2)) (Mycoplasma gallisepticum).